A 545-amino-acid chain; its full sequence is Reticulon-2 (545 aa).

2 disordered regions span residues 1–183 (MGQV…ETGE) and 199–250 (SPEV…EREP). The segment covering 14–25 (APSTASSTPDST) has biased composition (low complexity). The span at 32–43 (SDFRELHTAREF) shows a compositional bias: basic and acidic residues. A Phosphoserine modification is found at Ser44. Over residues 135-146 (RPLEDLRLRLDH) the composition is skewed to basic and acidic residues. Over residues 157 to 166 (GEDSSTSSST) the composition is skewed to low complexity. Positions 199-230 (SPEVLTPQLSPGSGTPQAGTPSPSRSRDSNSG) are enriched in polar residues. Residues Ser227 and Ser229 each carry the phosphoserine modification. One can recognise a Reticulon domain in the interval 345 to 545 (VADLLYWKDT…AVSGSKAKAE (201 aa)). Helical transmembrane passes span 368-388 (LLCLLHFSIVSVAAHLALLLL) and 463-483 (LLFYILTFVGAIFNGLTLLIL).

As to quaternary structure, interacts with isoform 1 but not isoform 3 of SPAST. Interacts with BACE1. Interacts (via first transmembrane domain) with ARL6IP5/GTRAP3-18. Interacts (via N-terminus) with SLC1A1/EAAC1; the interaction promotes cell surface expression of SLC1A1. Interacts with TMEM33. Highly expressed in skeletal muscle.

The protein resides in the endoplasmic reticulum membrane. The protein localises to the sarcoplasmic reticulum membrane. It is found in the cell membrane. Its subcellular location is the sarcolemma. It localises to the T-tubule. The protein resides in the cytoplasm. The protein localises to the myofibril. It is found in the sarcomere. Its subcellular location is the z line. It localises to the cytoskeleton. Functionally, inhibits amyloid precursor protein processing, probably by blocking BACE1 activity. Enhances trafficking of the glutamate transporter SLC1A1/EAAC1 from the endoplasmic reticulum to the cell surface. Plays a role in the translocation of SLC2A4/GLUT4 from intracellular membranes to the cell membrane which facilitates the uptake of glucose into the cell. The polypeptide is Reticulon-2 (RTN2) (Homo sapiens (Human)).